The following is a 332-amino-acid chain: Glycerol-3-phosphate dehydrogenase [NAD(P)+] (332 aa).

NADPH is bound by residues S11, F12, K32, and K106. K106, G137, and S139 together coordinate sn-glycerol 3-phosphate. Residue A141 participates in NADPH binding. Positions 192, 245, 255, 256, and 257 each coordinate sn-glycerol 3-phosphate. The active-site Proton acceptor is K192. Residue R256 participates in NADPH binding. NADPH-binding residues include V280 and E282.

The protein belongs to the NAD-dependent glycerol-3-phosphate dehydrogenase family.

It is found in the cytoplasm. The enzyme catalyses sn-glycerol 3-phosphate + NAD(+) = dihydroxyacetone phosphate + NADH + H(+). It carries out the reaction sn-glycerol 3-phosphate + NADP(+) = dihydroxyacetone phosphate + NADPH + H(+). It functions in the pathway membrane lipid metabolism; glycerophospholipid metabolism. In terms of biological role, catalyzes the reduction of the glycolytic intermediate dihydroxyacetone phosphate (DHAP) to sn-glycerol 3-phosphate (G3P), the key precursor for phospholipid synthesis. This chain is Glycerol-3-phosphate dehydrogenase [NAD(P)+], found in Staphylococcus carnosus (strain TM300).